We begin with the raw amino-acid sequence, 315 residues long: GTP cyclohydrolase MptA (315 aa).

Belongs to the GTP cyclohydrolase IV family. In terms of assembly, homodimer. Requires Fe(2+) as cofactor.

The enzyme catalyses GTP + H2O = 7,8-dihydroneopterin 2',3'-cyclic phosphate + formate + diphosphate + H(+). Its pathway is cofactor biosynthesis; 5,6,7,8-tetrahydromethanopterin biosynthesis. Functionally, converts GTP to 7,8-dihydro-D-neopterin 2',3'-cyclic phosphate, the first intermediate in the biosynthesis of coenzyme methanopterin. The protein is GTP cyclohydrolase MptA of Methanococcus maripaludis (strain C6 / ATCC BAA-1332).